The following is a 286-amino-acid chain: E3 SUMO-protein ligase K-bZIP (286 aa).

Disordered regions lie at residues M1–E22 and W106–R130.

In terms of assembly, interacts with host HDAC1 and HDAC2, these interactions suppress HDAC activities. Interacts with protein ORF57. Interacts with protein vPK. Sumoylated.

Its pathway is protein modification; protein sumoylation. Functionally, SUMO E3 ligase that plays a role in viral gene regulation and is essential for viral reactivation. Disrupts host G1 cell cycle control thus allowing viral transcription and translation to proceed at the early stages of infection. Catalyzes its own SUMO modification as well as that of its interacting partners such as host TP53 and RB1. Regulates viral gene expression and reactivation and may mediate the SUMOylation of viral promoters in the low methylated 'Lys-9' histone H3 (H3K9me) region which results in a diminution of viral gene expression after reactivation. SUMOylates also host histone lysine demethylase 4A/KDM4A, an essential step for complete enrichment of SUMO-2/3 on the viral genome during viral transactivation and reactivation. The polypeptide is E3 SUMO-protein ligase K-bZIP (K8) (Human herpesvirus 8 type P (isolate GK18) (HHV-8)).